The primary structure comprises 393 residues: Upstream-binding factor 1-like protein 1 (393 aa).

DNA-binding regions (HMG box) lie at residues 100–168 (PKRP…ARFR) and 222–288 (QKPP…DLWL). The segment at 308 to 393 (KNMAMTGGPD…SSGEEIEVDV (86 aa)) is disordered. A compositionally biased stretch (basic and acidic residues) spans 365-377 (EENRKKDREKEES).

It localises to the cytoplasm. The protein localises to the nucleus. Its function is as follows. Essential for proliferation of the inner cell mass and trophectodermal cells in peri-implantation development. This is Upstream-binding factor 1-like protein 1 from Homo sapiens (Human).